The following is a 318-amino-acid chain: Large ribosomal subunit protein uL10 (318 aa).

Y24 carries the post-translational modification Phosphotyrosine. At T59 the chain carries Phosphothreonine. K264 participates in a covalent cross-link: Glycyl lysine isopeptide (Lys-Gly) (interchain with G-Cter in ubiquitin). K298 participates in a covalent cross-link: Glycyl lysine isopeptide (Lys-Gly) (interchain with G-Cter in SUMO1); alternate. K298 participates in a covalent cross-link: Glycyl lysine isopeptide (Lys-Gly) (interchain with G-Cter in SUMO2); alternate. A disordered region spans residues 298–318 (KVEAKEESEESDEDMGFGLFD). Residues 303 to 312 (EESEESDEDM) are compositionally biased toward acidic residues. Phosphoserine occurs at positions 305 and 308.

The protein belongs to the universal ribosomal protein uL10 family. In terms of assembly, P0 forms a pentameric complex by interaction with dimers of P1 and P2. Identified in a IGF2BP1-dependent mRNP granule complex containing untranslated mRNAs. Interacts with APEX1. Interacts with FMR1. Post-translationally, ubiquitinated at Lys-264 by RNF14 and RNF25 in response to ribosome collisions (ribosome stalling).

The protein resides in the nucleus. It is found in the cytoplasm. In terms of biological role, ribosomal protein P0 is the functional equivalent of E.coli protein L10. The polypeptide is Large ribosomal subunit protein uL10 (RPLP0) (Sus scrofa (Pig)).